Consider the following 79-residue polypeptide: Conotoxin ArMSGL-021 (79 aa).

Residues 1-20 (MSRLGIMVLTLLLLVFIVTS) form the signal peptide. A propeptide spanning residues 21–44 (HQDAGEKQATHRGAINFRWRRSLI) is cleaved from the precursor. Intrachain disulfides connect Cys-52/Cys-64, Cys-56/Cys-73, and Cys-63/Cys-77. Leu-78 is modified (leucine amide).

This sequence belongs to the conotoxin O3 superfamily. Expressed by the venom duct.

Its subcellular location is the secreted. This chain is Conotoxin ArMSGL-021, found in Conus arenatus (Sand-dusted cone).